Reading from the N-terminus, the 492-residue chain is Protein adenylyltransferase Fic (492 aa).

The segment covering 1–17 has biased composition (low complexity); the sequence is MCTEAEQPSPPAQQQEQ. Residues 1–25 form a disordered region; it reads MCTEAEQPSPPAQQQEQGNPPLCKA. The chain crosses the membrane as a helical span at residues 33–55; the sequence is LYRLVLLFVAGSLAAWTFHALSS. 2 TPR repeats span residues 118-151 and 152-186; these read ALGA…APRH and PEVL…SPSN. An Inhibitory (S/T)XXXE(G/N) motif motif is present at residues 243-248; the sequence is SVGIEG. Residues E247 and 328-331 contribute to the ATP site; that span reads VGGH. The 136-residue stretch at 297–432 folds into the Fido domain; sequence ITIKDILELH…IRPFVRFIAD (136 aa). Residue H375 is part of the active site. Residues 379–386, 411–412, and N419 each bind ATP; these read DGNGRTSR and YY.

The protein belongs to the fic family. As to quaternary structure, homodimer.

The protein localises to the membrane. The enzyme catalyses L-tyrosyl-[protein] + ATP = O-(5'-adenylyl)-L-tyrosyl-[protein] + diphosphate. It carries out the reaction L-threonyl-[protein] + ATP = 3-O-(5'-adenylyl)-L-threonyl-[protein] + diphosphate. It catalyses the reaction 3-O-(5'-adenylyl)-L-threonyl-[protein] + H2O = L-threonyl-[protein] + AMP + H(+). The side chain of Glu-247 determines which of the two opposing activities (AMPylase or de-AMPylase) will take place. In response to endoplasmic reticulum stress, mediates de-AMPylase activity. Adenylyltransferase activity is inhibited by the inhibitory helix present at the N-terminus: Glu-247 binds ATP and competes with ATP-binding at Arg-386, thereby preventing adenylyltransferase activity. In unstressed cells, disengagement of Glu-247 promotes adenylyltransferase activity. Activation dissociates ATP-binding from Glu-247, allowing ordered binding of the entire ATP moiety with the alpha-phosphate in an orientation that is productive for accepting an incoming target hydroxyl side chain. In terms of biological role, protein that can both mediate the addition of adenosine 5'-monophosphate (AMP) to specific residues of target proteins (AMPylation), and the removal of the same modification from target proteins (de-AMPylation), depending on the context. The side chain of Glu-247 determines which of the two opposing activities (AMPylase or de-AMPylase) will take place. Acts as a key regulator of the unfolded protein response (UPR) by mediating AMPylation or de-AMPylation of Hsc70-3/BiP. In unstressed cells, acts as an adenylyltransferase by mediating AMPylation of Hsc70-3/BiP at 'Thr-518', thereby inactivating it. In response to endoplasmic reticulum stress, acts as a phosphodiesterase by mediating removal of ATP (de-AMPylation) from Hsc70-3/BiP at 'Thr-518', leading to restore HSPA5/BiP activity. The protein is Protein adenylyltransferase Fic of Drosophila sechellia (Fruit fly).